Here is a 192-residue protein sequence, read N- to C-terminus: I-Kappa-B like protein H1 (192 aa).

ANK repeat units follow at residues 94–126 (KGAQ…DING), 131–161 (AGLT…DVKV), and 165–192 (GKET…SKKM).

Belongs to the polydnaviridae I-Kappa-B-like protein family.

Suppresses the host immune response through NF-kappa-B inactivation. Possesses ankyrin repeat domains required for NF-kappa-B binding but lacks the regulatory regions required for dissociation from NF-kappa-B and degradation. Therefore, prevents host NF-kappa-B release and subsequent activation. This Microplitis demolitor bracovirus (isolate Webb) (MdBV) protein is I-Kappa-B like protein H1 (H4).